We begin with the raw amino-acid sequence, 719 residues long: MAKLIIINSEKGEKVETHEDIFKLSNLQQREIYAITNERTKSILLNQTFYTILDIENEPKDKVAFDSYNSLFPTSIFSYSRQDRLFGTCNHVLDNNIHYSFALFDSMVDNLSTYLPNDWNIIKISDSIDYPIGNDLLFYVFDNLVHMTIDQFVNSEEKQMNTVPKCKESQDKIKEVFTDIMSHLYMPAIDYDPQSYNYRVSRREIGNLVRDQVFSLVKGHIHLIGPEMESLRNIIMFLHAGNSITFHTIDTSTKSSYIKELEFNKKTKLTMASVLVNQRKNMNNFFKGLIRHYITYGIPRKVYYIGAYPSYWLELITWVPFNIVAYDPKYRRVDNDKIIWYDRLFDRNDIETIESKSYIYIDIRTDVRNLDTTKKQRIFKEEDDMIVDMAIKLASKQCTVMFKRKIFPGNNMSFGDPLFHPKLTQLGREYYNCITTIVSPSVYKESELYSLLLSARSNNVSNYVYGGSKFDQFSIVNCNSTVVALYSLSNTVNSLKTIEHAIKYNHIITFPHRTDRGDWRNIEELDNSSPFQNRKRQLEFEDWSIDPKNYVMKFRCEMVSESVFLQLGHSRALIPDLYNHMISLRMEMPLFYSDRFFSHIGIRQPSIFKRDSYMTSRLSAYISRQLTHSINLSVLKRNHFEGYSGHLIAIETSFSSLVFTMSPYRWLIRAKKLLTKNKMRDKFKIGDGQPHTREEFENTYDYLKINRLVNSTFRSLLLD.

Belongs to the rotavirus VP3 family. Interacts with VP1. Interacts with VP2.

It is found in the virion. The enzyme catalyses a 5'-end diphospho-ribonucleoside in mRNA + GTP + H(+) = a 5'-end (5'-triphosphoguanosine)-ribonucleoside in mRNA + diphosphate. It carries out the reaction a 5'-end (5'-triphosphoguanosine)-ribonucleoside in mRNA + S-adenosyl-L-methionine = a 5'-end (N(7)-methyl 5'-triphosphoguanosine)-ribonucleoside in mRNA + S-adenosyl-L-homocysteine. Its function is as follows. Multifunctional enzyme involved in mRNA capping. Catalyzes the formation of the 5' cap structure on the viral plus-strand transcripts. Specifically binds to GTP and displays guanylyltransferase and methyltransferase activities. Together with VP1 polymerase, forms an enzyme complex positioned near the channels situated at each of the five-fold vertices of the core. Following infection, the outermost layer of the virus is lost, leaving a double-layered particle (DLP) made up of the core and VP6 shell. VP1 then catalyzes the transcription of fully conservative plus-strand genomic RNAs that are capped by VP3 and extruded through the DLP's channels into the cytoplasm where they function as mRNAs for translation of viral proteins. DLPs probably have an RNA triphosphatase activity as well, whereas open cores don't. In Rotavirus X (strain RVX/Human/China/NADRV-J19/1997/GXP[X]) (RV ADRV-N), this protein is Protein VP3.